Consider the following 218-residue polypeptide: MGQKINPLGFRLGATQGHHSLWFAHPKKYSEGLQEDQKIRDCIQNYVQKNMRIFSGVEGIARIEIQKRIDLIQVIIFMGFPKLVIDDGSRKIEELQINVQKEFNSGNRKLNIAITRIGNPYGHPNILAEFIAGQLKNRVSFRKAMKKAIELTEQAGTKGIQVQIAGRIDGKEIARVEWIREGRVPLQTIRAKIDYCCYPVRTIYGILGIKIWIFVDEQ.

Residues 47–118 form the KH type-2 domain; the sequence is VQKNMRIFSG…KLNIAITRIG (72 aa).

The protein belongs to the universal ribosomal protein uS3 family. As to quaternary structure, part of the 30S ribosomal subunit.

The protein resides in the plastid. It localises to the chloroplast. The chain is Small ribosomal subunit protein uS3c (rps3) from Cucumis sativus (Cucumber).